Reading from the N-terminus, the 149-residue chain is uncharacterized protein (149 aa).

This is an uncharacterized protein from Caenorhabditis elegans.